The chain runs to 274 residues: Orotidine 5'-phosphate decarboxylase (274 aa).

Substrate-binding positions include aspartate 40, 62–64 (KTH), 93–102 (DRKFVDIGNT), tyrosine 227, and arginine 245. Lysine 95 acts as the Proton donor in catalysis.

Belongs to the OMP decarboxylase family.

It catalyses the reaction orotidine 5'-phosphate + H(+) = UMP + CO2. Its pathway is pyrimidine metabolism; UMP biosynthesis via de novo pathway; UMP from orotate: step 2/2. This is Orotidine 5'-phosphate decarboxylase (URA3) from Coccidioides immitis (strain RS) (Valley fever fungus).